A 362-amino-acid chain; its full sequence is DNA replication and repair protein RecF (362 aa).

ATP is bound at residue 31–38 (GDNAAGKT).

Belongs to the RecF family.

It localises to the cytoplasm. In terms of biological role, the RecF protein is involved in DNA metabolism; it is required for DNA replication and normal SOS inducibility. RecF binds preferentially to single-stranded, linear DNA. It also seems to bind ATP. This chain is DNA replication and repair protein RecF, found in Hydrogenovibrio crunogenus (strain DSM 25203 / XCL-2) (Thiomicrospira crunogena).